The following is a 611-amino-acid chain: Protein Pixie (611 aa).

2 4Fe-4S ferredoxin-type domains span residues 15-45 (RIAIVSDDKCKPKRCRQECKKTCPVVRMGKL) and 54-83 (KIASLSEELCIGCGICVKKCPFEAITIINL). 2 ABC transporter domains span residues 78-323 (ITII…FLDG) and 350-570 (IKRM…LELL). Residues 118–125 (GQNGIGKS) and 387–394 (GENGTGKT) each bind ATP.

It belongs to the ABC transporter superfamily. ABCE family. In terms of assembly, interacts with components of eIF3 complex, namely eIF3a, eIF3j, eIF3b, eIF3c and eIF3i. Associates with the 40S ribosome subunit in an ATP-dependent manner and independently from the presence of the eIF3 complex. Forms a complex with Git and Pak; the interaction with Pak may be mediated by pix/dPIX. Post-translationally, ubiquitinated by Cnot4. Ubiquitination mediates the recruitment of autophagy receptors to the mitochondrial outer membrane and initiates mitophagy. Expressed in early and late larval imaginal disks (at protein level).

It localises to the cytoplasm. Functionally, plays a role in translation initiation and quality control of translation. Together with pelo and HBS1, is required for 48S complex formation from 80S ribosomes and dissociation of vacant 80S ribosomes. Stabilizes core components of eIF3 complex promoting their assembly into translation initiation-competent complexes. Together with pelo and HBS1, recognizes stalled ribosomes and promotes dissociation of elongation complexes assembled on non-stop mRNAs; this triggers endonucleolytic cleavage of the mRNA, a mechanism to release non-functional ribosomes and to degrade damaged mRNAs as part of the No-Go Decay (NGD) pathway. Plays a role in the regulation of mRNA turnover. Plays a role in quality control of translation of mitochondrial outer membrane-localized mRNA. As part of the Pink1-regulated signaling, ubiquitinated by Cnot4 upon mitochondria damage; this modification generates polyubiquitin signals that recruits autophagy receptors to the mitochondrial outer membrane to initiate mitophagy. Required in the wing disk for cell division and growth as well as cell survival. During muscle embryogenesis, required for the recruitment of Pak to muscle attachments in the embryo, hence may play a role in proper muscle morphogenesis and proper guidance and targeting of subsets of myotubes. The polypeptide is Protein Pixie (Drosophila melanogaster (Fruit fly)).